Reading from the N-terminus, the 327-residue chain is Ribose-phosphate pyrophosphokinase (327 aa).

An ATP-binding site is contributed by 51–53 (DGE). Residues H144 and D183 each contribute to the Mg(2+) site. Residue K207 is part of the active site. D-ribose 5-phosphate contacts are provided by residues R209, D233, and 237-241 (DTGGT).

Belongs to the ribose-phosphate pyrophosphokinase family. Class I subfamily. As to quaternary structure, homohexamer. Mg(2+) serves as cofactor.

It is found in the cytoplasm. It carries out the reaction D-ribose 5-phosphate + ATP = 5-phospho-alpha-D-ribose 1-diphosphate + AMP + H(+). It participates in metabolic intermediate biosynthesis; 5-phospho-alpha-D-ribose 1-diphosphate biosynthesis; 5-phospho-alpha-D-ribose 1-diphosphate from D-ribose 5-phosphate (route I): step 1/1. Its function is as follows. Involved in the biosynthesis of the central metabolite phospho-alpha-D-ribosyl-1-pyrophosphate (PRPP) via the transfer of pyrophosphoryl group from ATP to 1-hydroxyl of ribose-5-phosphate (Rib-5-P). The polypeptide is Ribose-phosphate pyrophosphokinase (Prochlorococcus marinus (strain SARG / CCMP1375 / SS120)).